The chain runs to 235 residues: Phosphoribosylaminoimidazole-succinocarboxamide synthase (235 aa).

Belongs to the SAICAR synthetase family.

The catalysed reaction is 5-amino-1-(5-phospho-D-ribosyl)imidazole-4-carboxylate + L-aspartate + ATP = (2S)-2-[5-amino-1-(5-phospho-beta-D-ribosyl)imidazole-4-carboxamido]succinate + ADP + phosphate + 2 H(+). It participates in purine metabolism; IMP biosynthesis via de novo pathway; 5-amino-1-(5-phospho-D-ribosyl)imidazole-4-carboxamide from 5-amino-1-(5-phospho-D-ribosyl)imidazole-4-carboxylate: step 1/2. The sequence is that of Phosphoribosylaminoimidazole-succinocarboxamide synthase from Streptococcus sanguinis (strain SK36).